The primary structure comprises 285 residues: Bifunctional protein FolD (285 aa).

Residues 166–168 (GRS), Ser-191, and Ile-232 contribute to the NADP(+) site.

It belongs to the tetrahydrofolate dehydrogenase/cyclohydrolase family. As to quaternary structure, homodimer.

It catalyses the reaction (6R)-5,10-methylene-5,6,7,8-tetrahydrofolate + NADP(+) = (6R)-5,10-methenyltetrahydrofolate + NADPH. It carries out the reaction (6R)-5,10-methenyltetrahydrofolate + H2O = (6R)-10-formyltetrahydrofolate + H(+). The protein operates within one-carbon metabolism; tetrahydrofolate interconversion. In terms of biological role, catalyzes the oxidation of 5,10-methylenetetrahydrofolate to 5,10-methenyltetrahydrofolate and then the hydrolysis of 5,10-methenyltetrahydrofolate to 10-formyltetrahydrofolate. The sequence is that of Bifunctional protein FolD from Rickettsia typhi (strain ATCC VR-144 / Wilmington).